The chain runs to 240 residues: NAD-dependent protein deacylase Sir2 (240 aa).

Residues 1 to 235 (MQVTVLSGAG…PTLLQRLPEL (235 aa)) form the Deacetylase sirtuin-type domain. Position 8–28 (8–28 (GAGISAESGVPTFRDAETGLW)) interacts with NAD(+). Substrate is bound by residues Tyr-53 and Arg-56. 86–89 (QNID) lines the NAD(+) pocket. His-104 acts as the Proton acceptor in catalysis. The Zn(2+) site is built by Cys-112, Cys-115, Cys-138, and Cys-140. NAD(+) contacts are provided by residues 177–179 (GTS), 203–205 (NPE), and Ala-221.

This sequence belongs to the sirtuin family. Class III subfamily. Interacts with both Ku and LigD; may form a trimeric complex during NHEJ. Zn(2+) is required as a cofactor.

Its subcellular location is the cytoplasm. The catalysed reaction is N(6)-succinyl-L-lysyl-[protein] + NAD(+) + H2O = 2''-O-succinyl-ADP-D-ribose + nicotinamide + L-lysyl-[protein]. The enzyme catalyses N(6)-acetyl-L-lysyl-[protein] + NAD(+) + H2O = 2''-O-acetyl-ADP-D-ribose + nicotinamide + L-lysyl-[protein]. NAD-dependent lysine deacetylase and desuccinylase that specifically removes acetyl and succinyl groups on target proteins. Modulates the activities of several proteins which are inactive in their acylated form. In terms of biological role, involved in non-homologous end joining (NHEJ) repair of blunt, 5' overhang and 3' overhang DNA double strand breaks (DSB). Overexpression increases the efficiency of NHEJ of the above DSBs 2-fold with no effect on repair fidelity. The sequence is that of NAD-dependent protein deacylase Sir2 (sir2) from Mycolicibacterium smegmatis (strain ATCC 700084 / mc(2)155) (Mycobacterium smegmatis).